Consider the following 187-residue polypeptide: Orotate phosphoribosyltransferase (187 aa).

Residues Arg-98, Lys-99, Lys-102, His-104, and Glu-128–Ser-136 contribute to the 5-phospho-alpha-D-ribose 1-diphosphate site. The orotate site is built by Thr-132 and Arg-160.

Belongs to the purine/pyrimidine phosphoribosyltransferase family. PyrE subfamily. As to quaternary structure, homodimer. It depends on Mg(2+) as a cofactor.

The enzyme catalyses orotidine 5'-phosphate + diphosphate = orotate + 5-phospho-alpha-D-ribose 1-diphosphate. It participates in pyrimidine metabolism; UMP biosynthesis via de novo pathway; UMP from orotate: step 1/2. Catalyzes the transfer of a ribosyl phosphate group from 5-phosphoribose 1-diphosphate to orotate, leading to the formation of orotidine monophosphate (OMP). In Bradyrhizobium diazoefficiens (strain JCM 10833 / BCRC 13528 / IAM 13628 / NBRC 14792 / USDA 110), this protein is Orotate phosphoribosyltransferase.